The primary structure comprises 447 residues: Ribosomal protein uS12 methylthiotransferase RimO (447 aa).

In terms of domain architecture, MTTase N-terminal spans 6 to 122; it reads EKVSMVSLGC…IAEIIEEKSS (117 aa). The [4Fe-4S] cluster site is built by Cys15, Cys51, Cys85, Cys160, Cys164, and Cys167. A Radical SAM core domain is found at 146-376; it reads SSPAYTAYLK…MKAQARVSFK (231 aa). The 69-residue stretch at 379–447 folds into the TRAM domain; the sequence is RRLIDTEEQV…DYDLIGEIIS (69 aa).

It belongs to the methylthiotransferase family. RimO subfamily. The cofactor is [4Fe-4S] cluster.

It localises to the cytoplasm. It carries out the reaction L-aspartate(89)-[ribosomal protein uS12]-hydrogen + (sulfur carrier)-SH + AH2 + 2 S-adenosyl-L-methionine = 3-methylsulfanyl-L-aspartate(89)-[ribosomal protein uS12]-hydrogen + (sulfur carrier)-H + 5'-deoxyadenosine + L-methionine + A + S-adenosyl-L-homocysteine + 2 H(+). Functionally, catalyzes the methylthiolation of an aspartic acid residue of ribosomal protein uS12. The sequence is that of Ribosomal protein uS12 methylthiotransferase RimO from Geobacter sulfurreducens (strain ATCC 51573 / DSM 12127 / PCA).